The sequence spans 754 residues: Ubiquitin carboxyl-terminal hydrolase 9 (754 aa).

Residues Met-1–His-14 are compositionally biased toward basic residues. Residues Met-1–Leu-76 form a disordered region. The segment covering Ser-42–Ser-58 has biased composition (low complexity). In terms of domain architecture, USP spans Phe-134–Thr-667. Catalysis depends on Cys-143, which acts as the Nucleophile. Residues Glu-194–Asn-209 show a composition bias toward polar residues. The disordered stretch occupies residues Glu-194 to Pro-273. Low complexity predominate over residues Gln-222 to Gln-233. Over residues Gly-250–Gln-272 the composition is skewed to basic and acidic residues. His-618 functions as the Proton acceptor in the catalytic mechanism. Positions Val-726–Lys-754 are disordered. Residues Lys-727–Lys-738 show a composition bias toward basic and acidic residues. Residues Lys-739–Arg-748 show a composition bias toward basic residues.

Belongs to the peptidase C19 family.

The enzyme catalyses Thiol-dependent hydrolysis of ester, thioester, amide, peptide and isopeptide bonds formed by the C-terminal Gly of ubiquitin (a 76-residue protein attached to proteins as an intracellular targeting signal).. The chain is Ubiquitin carboxyl-terminal hydrolase 9 (UBP9) from Saccharomyces cerevisiae (strain ATCC 204508 / S288c) (Baker's yeast).